The chain runs to 282 residues: Acetyl-coenzyme A carboxylase carboxyl transferase subunit beta (282 aa).

Residues 26-282 enclose the CoA carboxyltransferase N-terminal domain; the sequence is QWVKCPETGE…IIRLLNLLME (257 aa).

This sequence belongs to the AccD/PCCB family. As to quaternary structure, acetyl-CoA carboxylase is a heterohexamer composed of biotin carboxyl carrier protein (AccB), biotin carboxylase (AccC) and two subunits each of ACCase subunit alpha (AccA) and ACCase subunit beta (AccD).

It is found in the cytoplasm. It catalyses the reaction N(6)-carboxybiotinyl-L-lysyl-[protein] + acetyl-CoA = N(6)-biotinyl-L-lysyl-[protein] + malonyl-CoA. The protein operates within lipid metabolism; malonyl-CoA biosynthesis; malonyl-CoA from acetyl-CoA: step 1/1. In terms of biological role, component of the acetyl coenzyme A carboxylase (ACC) complex. Biotin carboxylase (BC) catalyzes the carboxylation of biotin on its carrier protein (BCCP) and then the CO(2) group is transferred by the transcarboxylase to acetyl-CoA to form malonyl-CoA. This chain is Acetyl-coenzyme A carboxylase carboxyl transferase subunit beta, found in Salinibacter ruber (strain DSM 13855 / M31).